The chain runs to 236 residues: Pyridoxine 5'-phosphate synthase (236 aa).

A 3-amino-2-oxopropyl phosphate-binding site is contributed by Asn-6. Position 8-9 (8-9 (DH)) interacts with 1-deoxy-D-xylulose 5-phosphate. Arg-17 provides a ligand contact to 3-amino-2-oxopropyl phosphate. The active-site Proton acceptor is the His-42. 2 residues coordinate 1-deoxy-D-xylulose 5-phosphate: Arg-44 and His-49. Glu-69 functions as the Proton acceptor in the catalytic mechanism. Residue Thr-99 participates in 1-deoxy-D-xylulose 5-phosphate binding. The Proton donor role is filled by His-190. 3-amino-2-oxopropyl phosphate is bound by residues Gly-191 and 212–213 (GH).

It belongs to the PNP synthase family. Homooctamer; tetramer of dimers.

The protein resides in the cytoplasm. The catalysed reaction is 3-amino-2-oxopropyl phosphate + 1-deoxy-D-xylulose 5-phosphate = pyridoxine 5'-phosphate + phosphate + 2 H2O + H(+). It functions in the pathway cofactor biosynthesis; pyridoxine 5'-phosphate biosynthesis; pyridoxine 5'-phosphate from D-erythrose 4-phosphate: step 5/5. Catalyzes the complicated ring closure reaction between the two acyclic compounds 1-deoxy-D-xylulose-5-phosphate (DXP) and 3-amino-2-oxopropyl phosphate (1-amino-acetone-3-phosphate or AAP) to form pyridoxine 5'-phosphate (PNP) and inorganic phosphate. The protein is Pyridoxine 5'-phosphate synthase of Chlorobium phaeobacteroides (strain DSM 266 / SMG 266 / 2430).